The sequence spans 92 residues: Small ribosomal subunit protein bS16 (92 aa).

Belongs to the bacterial ribosomal protein bS16 family.

The sequence is that of Small ribosomal subunit protein bS16 from Desulforudis audaxviator (strain MP104C).